A 251-amino-acid chain; its full sequence is Hydroxyacylglutathione hydrolase (251 aa).

Zn(2+) contacts are provided by His-53, His-55, Asp-57, His-58, His-110, Asp-127, and His-165.

It belongs to the metallo-beta-lactamase superfamily. Glyoxalase II family. In terms of assembly, monomer. Zn(2+) is required as a cofactor.

The enzyme catalyses an S-(2-hydroxyacyl)glutathione + H2O = a 2-hydroxy carboxylate + glutathione + H(+). Its pathway is secondary metabolite metabolism; methylglyoxal degradation; (R)-lactate from methylglyoxal: step 2/2. In terms of biological role, thiolesterase that catalyzes the hydrolysis of S-D-lactoyl-glutathione to form glutathione and D-lactic acid. This chain is Hydroxyacylglutathione hydrolase, found in Escherichia fergusonii (strain ATCC 35469 / DSM 13698 / CCUG 18766 / IAM 14443 / JCM 21226 / LMG 7866 / NBRC 102419 / NCTC 12128 / CDC 0568-73).